A 190-amino-acid chain; its full sequence is Pyridoxal 5'-phosphate synthase subunit PdxT (190 aa).

Residue 46–48 (GES) coordinates L-glutamine. C78 functions as the Nucleophile in the catalytic mechanism. L-glutamine is bound by residues R105 and 138–139 (IR). Residues H174 and E176 each act as charge relay system in the active site.

It belongs to the glutaminase PdxT/SNO family. In terms of assembly, in the presence of PdxS, forms a dodecamer of heterodimers. Only shows activity in the heterodimer.

The catalysed reaction is aldehydo-D-ribose 5-phosphate + D-glyceraldehyde 3-phosphate + L-glutamine = pyridoxal 5'-phosphate + L-glutamate + phosphate + 3 H2O + H(+). The enzyme catalyses L-glutamine + H2O = L-glutamate + NH4(+). It participates in cofactor biosynthesis; pyridoxal 5'-phosphate biosynthesis. Its function is as follows. Catalyzes the hydrolysis of glutamine to glutamate and ammonia as part of the biosynthesis of pyridoxal 5'-phosphate. The resulting ammonia molecule is channeled to the active site of PdxS. The chain is Pyridoxal 5'-phosphate synthase subunit PdxT from Bifidobacterium longum (strain NCC 2705).